We begin with the raw amino-acid sequence, 577 residues long: Sensory neuron membrane protein 2 (577 aa).

Over 1 to 6 the chain is Cytoplasmic; it reads MVQCTL. A helical transmembrane segment spans residues 7–27; it reads IWAGIGAMMAVSGALLGWVVF. Over 28–519 the chain is Extracellular; the sequence is PRAVHEKVIE…LMKVLSLLDV (492 aa). Residues Asn-66, Asn-161, Asn-271, and Asn-307 are each glycosylated (N-linked (GlcNAc...) asparagine). 3 disulfide bridges follow: Cys-316–Cys-384, Cys-345–Cys-411, and Cys-386–Cys-400. A helical membrane pass occupies residues 520 to 540; the sequence is VQWVLIGVGLLLAVLMPTVYF. Topologically, residues 541-577 are cytoplasmic; that stretch reads VKRCRGEGSRTVSPAVTATTSAASLSTVAGVTGDRSK.

The protein belongs to the CD36 family.

The protein resides in the cell membrane. Its function is as follows. Plays an olfactory role that is not restricted to pheromone sensitivity. This is Sensory neuron membrane protein 2 from Anopheles gambiae (African malaria mosquito).